Consider the following 422-residue polypeptide: Glutamate-1-semialdehyde 2,1-aminomutase (422 aa).

The residue at position 264 (K264) is an N6-(pyridoxal phosphate)lysine.

Belongs to the class-III pyridoxal-phosphate-dependent aminotransferase family. HemL subfamily. In terms of assembly, homodimer. Requires pyridoxal 5'-phosphate as cofactor.

Its subcellular location is the cytoplasm. The enzyme catalyses (S)-4-amino-5-oxopentanoate = 5-aminolevulinate. The protein operates within porphyrin-containing compound metabolism; protoporphyrin-IX biosynthesis; 5-aminolevulinate from L-glutamyl-tRNA(Glu): step 2/2. This is Glutamate-1-semialdehyde 2,1-aminomutase from Clostridium tetani (strain Massachusetts / E88).